Reading from the N-terminus, the 343-residue chain is GTPase Obg (343 aa).

Residues 2–160 (EKFVDRVKIF…RWIILELKLI (159 aa)) enclose the Obg domain. An OBG-type G domain is found at 161–332 (ADVGLVGFPN…LKEGLWKKYE (172 aa)). Residues 167 to 174 (GFPNAGKS), 192 to 196 (FTTLS), 214 to 217 (DIPG), 284 to 287 (NKID), and 313 to 315 (SAL) each bind GTP. Mg(2+) contacts are provided by S174 and T194.

The protein belongs to the TRAFAC class OBG-HflX-like GTPase superfamily. OBG GTPase family. In terms of assembly, monomer. Mg(2+) serves as cofactor.

The protein resides in the cytoplasm. In terms of biological role, an essential GTPase which binds GTP, GDP and possibly (p)ppGpp with moderate affinity, with high nucleotide exchange rates and a fairly low GTP hydrolysis rate. Plays a role in control of the cell cycle, stress response, ribosome biogenesis and in those bacteria that undergo differentiation, in morphogenesis control. The sequence is that of GTPase Obg from Aquifex aeolicus (strain VF5).